The sequence spans 323 residues: MKILNSLEGYIDTYNPWKNTYALFRSLLGFSTLLVLLFNSTDILFSYSANNVTCENVYIPTAFCFAKEYSINFEIIRYLMIFILTLVVIGWRPRFTGLFHWYICYSIQTSALTIDGGEQIATVLSFLILPVTLLDSRRNHWNIKKNNNESFTKKTVLFYIMTIIKIQVFIIYLNAALERLKNKEWAEGTAIYYFFSDPVFGLPEYQLNLMNPLLESNFIVVITWLVTIFELFLAASIISNIRIKRIALVLGILFHIGIIFSIGIVSFGLIMISALIIYLHPVQQNITMNWCSPLFKYIYVKGKRNFKRIGGESVKFLTKLFHS.

Helical transmembrane passes span Leu-27–Ala-49, Ser-70–Arg-92, Leu-112–Leu-134, Thr-155–Leu-177, Ile-219–Ile-241, and Leu-248–Ile-270.

The protein resides in the cell membrane. Functionally, required for the maturation of SdpC to SDP. Not required for SdpC signal peptide cleavage, secretion from the cell or disulfide bond formation. This Bacillus subtilis (strain 168) protein is Sporulation-delaying protein SdpB.